Reading from the N-terminus, the 145-residue chain is Large ribosomal subunit protein bL19 (145 aa).

The protein belongs to the bacterial ribosomal protein bL19 family.

Functionally, this protein is located at the 30S-50S ribosomal subunit interface and may play a role in the structure and function of the aminoacyl-tRNA binding site. This chain is Large ribosomal subunit protein bL19, found in Brucella abortus (strain S19).